Here is an 880-residue protein sequence, read N- to C-terminus: Potassium/sodium hyperpolarization-activated cyclic nucleotide-gated channel 1 (880 aa).

Residues 1–80 (MEGGGKPNSS…SAGGLEDAEG (80 aa)) form a disordered region. At 1-136 (MEGGGKPNSS…WIIHSYSDFR (136 aa)) the chain is on the cytoplasmic side. A compositionally biased stretch (low complexity) spans 8–34 (NSSSNSRDDGNSVFPAKAPATGAGPAA). Gly residues predominate over residues 62 to 71 (DGGGGGGEES). Residues 137 to 158 (FYWDLIMLIMMVGNLVIIPVGI) traverse the membrane as a helical segment. The Extracellular portion of the chain corresponds to 159–167 (TFFTEQTTT). The chain crosses the membrane as a helical span at residues 168–188 (PWIIFNVASDTVFLLDLIMNF). The Cytoplasmic segment spans residues 189-209 (RTGTVNEDSSEIILDPKVIKM). Residues 210 to 230 (NYLKSWFVVDFISSIPVDYIF) traverse the membrane as a helical segment. Topologically, residues 231–254 (LIVEKGMDSEVYKTARALRIVRFT) are extracellular. A helical; Voltage-sensor membrane pass occupies residues 255–275 (KILSLLRLLRLSRLIRYIHQW). The Cytoplasmic segment spans residues 276 to 289 (EEIFHMTYDLASAV). The chain crosses the membrane as a helical span at residues 290-312 (VRIFNLIGMMLLLCHWDGCLQFL). Residues 313–338 (VPLLQDFPPDCWVSLNEMVNDSWGKQ) are Extracellular-facing. An N-linked (GlcNAc...) asparagine glycan is attached at Asn-332. The segment at residues 339–360 (YSYALFKAMSHMLCIGYGAQAP) is an intramembrane region (pore-forming). A Selectivity filter motif is present at residues 352–356 (CIGYG). The Extracellular segment spans residues 361–365 (VSMSD). The helical transmembrane segment at 366–386 (LWITMLSMIVGATCYAMFVGH) threads the bilayer. The Cytoplasmic portion of the chain corresponds to 387–880 (ATALIQSLDS…AEKPRFASNL (494 aa)). 3',5'-cyclic AMP contacts are provided by Gly-533, Glu-534, Cys-536, Arg-543, Thr-544, Arg-584, and Arg-587. A compositionally biased stretch (polar residues) spans 641-664 (LNSTSSTATPTSRMRTQSPPVYTA). Disordered regions lie at residues 641 to 686 (LNST…QPSA), 718 to 786 (ASQL…LPHE), and 835 to 880 (MSSG…ASNL). 2 stretches are compositionally biased toward low complexity: residues 665–685 (TSLS…PQPS) and 725–738 (PQQQ…QTQP). The segment covering 760–770 (STQALPNTSLT) has biased composition (polar residues). Over residues 844 to 855 (RGVPPAPPPPAA) the composition is skewed to pro residues. Over residues 870–880 (EAEKPRFASNL) the composition is skewed to basic and acidic residues.

This sequence belongs to the potassium channel HCN family. Homotetramer. Heterotetramer with HCN2. The potassium channel is composed of a homo- or heterotetrameric complex of pore-forming subunits. Interacts with KCNE2. Interacts with the SH3 domain of CSK. Detected in myocytes in heart sinoatrial node (SAN) and in brain, in particular in the granule cell layer and in Purkinje neuron bodies in the cerebellum.

The protein resides in the cell membrane. It carries out the reaction Na(+)(in) = Na(+)(out). It catalyses the reaction K(+)(in) = K(+)(out). Activated by cAMP. cAMP binding promotes tetramerization and formation of an active channel. Compared to other family members, cAMP has less stimulatory effect on HCN1 because part of the molecules already contain bound cAMP and form homotetramers when cAMP levels are low, this inherent tetramerization in HCN1 results in a weaker response to increased cAMP. Its function is as follows. Hyperpolarization-activated ion channel that are permeable to sodium and potassium ions. Exhibits weak selectivity for potassium over sodium ions. Contributes to the native pacemaker currents in heart (If) and in neurons (Ih). Participates in cerebellar mechanisms of motor learning. May mediate responses to sour stimuli. This is Potassium/sodium hyperpolarization-activated cyclic nucleotide-gated channel 1 (HCN1) from Oryctolagus cuniculus (Rabbit).